The following is a 317-amino-acid chain: MASLGRLLCAWVLLLCGLASPGLSGSYERGSKRPIIGIIMQECYGNMTKLGRFYIAASYVKFIESAGARVVPIRLDLNDAQYETLFRSINGVLLPGGGANLTHSGYSRVAKIFFTKALESFDNGDYFPVWGTCLGLEELSVLVSNDNLLTLTNTSSVKLPLNFTRDSKQSRMFRNLPEELLNSLASENLTANFHKWSLSVKNFTENEKLKKFFNILTVNTDGKTEFISSMEGYKYPIYAVQWHPEKAPFEWKKLRGISHAPNAVKTSFYLAKFFISEALKNDHHFENELEETESLIYQFCPVYTGNISSFQQAYMFN.

Positions 1 to 24 are cleaved as a signal peptide; the sequence is MASLGRLLCAWVLLLCGLASPGLS. Residues 25 to 317 form the Gamma-glutamyl hydrolase domain; that stretch reads GSYERGSKRP…SSFQQAYMFN (293 aa). N-linked (GlcNAc...) asparagine glycosylation is found at Asn46 and Asn100. The active-site Nucleophile is Cys133. 4 N-linked (GlcNAc...) asparagine glycosylation sites follow: Asn153, Asn162, Asn188, and Asn202. The active-site Proton donor is His243. N-linked (GlcNAc...) asparagine glycosylation is present at Asn306.

It belongs to the peptidase C26 family. Homodimer.

The protein resides in the secreted. It localises to the extracellular space. Its subcellular location is the lysosome. The protein localises to the melanosome. The catalysed reaction is (6S)-5,6,7,8-tetrahydrofolyl-(gamma-L-Glu)(n) + (n-1) H2O = (6S)-5,6,7,8-tetrahydrofolate + (n-1) L-glutamate. With respect to regulation, activity is altered by insulin and estrogen. Its function is as follows. Hydrolyzes the polyglutamate sidechains of pteroylpolyglutamates. Progressively removes gamma-glutamyl residues from pteroylpoly-gamma-glutamate to yield pteroyl-alpha-glutamate (folic acid) and free glutamate. May play an important role in the bioavailability of dietary pteroylpolyglutamates and in the metabolism of pteroylpolyglutamates and antifolates. Exhibits either endo- or exopeptidase activity depending upon the tissue of origin. When secreted, it acts primarily as an endopeptidase. The chain is Gamma-glutamyl hydrolase (Ggh) from Rattus norvegicus (Rat).